Consider the following 365-residue polypeptide: Chaperone protein DnaJ (365 aa).

Residues Asp4–Gly70 enclose the J domain. The CR-type zinc finger occupies Gly139–Asp220. The Zn(2+) site is built by Cys152, Cys155, Cys168, Cys171, Cys194, Cys197, Cys208, and Cys211. CXXCXGXG motif repeat units follow at residues Cys152–Gly159, Cys168–Gly175, Cys194–Gly201, and Cys208–Gly215.

Belongs to the DnaJ family. Homodimer. Requires Zn(2+) as cofactor.

Its subcellular location is the cytoplasm. Its function is as follows. Participates actively in the response to hyperosmotic and heat shock by preventing the aggregation of stress-denatured proteins and by disaggregating proteins, also in an autonomous, DnaK-independent fashion. Unfolded proteins bind initially to DnaJ; upon interaction with the DnaJ-bound protein, DnaK hydrolyzes its bound ATP, resulting in the formation of a stable complex. GrpE releases ADP from DnaK; ATP binding to DnaK triggers the release of the substrate protein, thus completing the reaction cycle. Several rounds of ATP-dependent interactions between DnaJ, DnaK and GrpE are required for fully efficient folding. Also involved, together with DnaK and GrpE, in the DNA replication of plasmids through activation of initiation proteins. This is Chaperone protein DnaJ from Thermoplasma volcanium (strain ATCC 51530 / DSM 4299 / JCM 9571 / NBRC 15438 / GSS1).